The following is a 393-amino-acid chain: Cytotoxic and regulatory T-cell molecule (393 aa).

The N-terminal stretch at 1 to 16 (MWWGALSLLFWVPVQA) is a signal peptide. The 95-residue stretch at 17 to 111 (AFLKMETVTV…SVKTKQVRVT (95 aa)) folds into the Ig-like V-type domain. Topologically, residues 17-289 (AFLKMETVTV…HTGLARRKSG (273 aa)) are extracellular. Intrachain disulfides connect Cys36-Cys96 and Cys139-Cys194. N-linked (GlcNAc...) asparagine glycosylation is found at Asn85 and Asn176. The Ig-like C2-type domain maps to 119–208 (PTVEALVLRR…EGLHGRKLVA (90 aa)). The span at 218–228 (DQETSDQETSD) shows a compositional bias: acidic residues. Residues 218-280 (DQETSDQETS…GLSTEASAQH (63 aa)) form a disordered region. Positions 229-246 (APEQSSLSSQALQQPTST) are enriched in low complexity. Positions 247-256 (VSMMENSSIP) are enriched in polar residues. The span at 257–267 (ETDKEEKEHAT) shows a compositional bias: basic and acidic residues. The segment covering 270-280 (PGLSTEASAQH) has biased composition (polar residues). Residues 290 to 310 (ILLLTLVSFLIFILFIIVQLF) traverse the membrane as a helical segment. Residues 311–393 (IMKLRKAHVV…KHSRVPESIV (83 aa)) lie on the Cytoplasmic side of the membrane. Positions 333–356 (ESYRSRSNNEETSSQENSSQAPQS) are disordered. Positions 342 to 352 (EETSSQENSSQ) are enriched in low complexity. Positions 390-393 (ESIV) match the PDZ-binding motif.

The protein belongs to the nectin family. Monomer. May form homodimer (via Ig-like V-type domain). Interacts (via Ig-like V-type domain) with CADM1 (via Ig-like V-type domain); the interaction competes with CRTAM homodimerization and CADM1 homodimerization. Interacts (via PDZ-binding motif) with SCRIB (via PDZ domain 3); the interaction promotes CRTAM and SCRIB polarization in a subset of CD4+ T-cells. In terms of tissue distribution, in the immune system, expression is restricted to activated class-I MHC-restricted cells, including NKT, NK and CD8+ T-cells (at protein level). Transiently expressed in activated CD8+ T-cells and a subset of activated CD4+ T-cells (at protein level). Expressed in activated intestinal T-cells, specifically intraepithelial CD4+ CD8+ T-cells, intraepithelial CD4+ T-cells and, CD8+ T-cells in the intestine epithelium, lamina propria, Peyer's Patches and mesenteric lymph nodes. Also expressed in spleen, brain and testis.

The protein resides in the cell membrane. Functionally, mediates heterophilic cell-cell adhesion which regulates the activation, differentiation and tissue retention of various T-cell subsets. Interaction with CADM1 promotes natural killer (NK) cell cytotoxicity and IFNG/interferon-gamma secretion by CD8+ T-cells in vitro as well as NK cell-mediated rejection of tumors expressing CADM1 in vivo. Regulates CD8+ T-cell proliferation in response to T-cell receptor (TCR) activation. Appears to be dispensable for CD8+ T-cell-mediated cytotoxicity. Interaction with SCRIB promotes the late phase of cellular polarization of a subset of CD4+ T-cells, which in turn regulates TCR-mediated proliferation and IFNG, IL17 and IL22 production. By interacting with CADM1 on CD8+ dendritic cells, regulates the retention of activated CD8+ T-cells within the draining lymph node. Required for the intestinal retention of intraepithelial CD4+ CD8+ T-cells and, to a lesser extent, intraepithelial and lamina propria CD8+ T-cells and CD4+ T-cells. Interaction with CADM1 promotes the adhesion to gut-associated CD103+ dendritic cells, which may facilitate the expression of gut-homing and adhesion molecules on T-cells and the conversion of CD4+ T-cells into CD4+ CD8+ T-cells. This is Cytotoxic and regulatory T-cell molecule from Mus musculus (Mouse).